The chain runs to 949 residues: Glycine dehydrogenase (decarboxylating) (949 aa).

Residue K704 is modified to N6-(pyridoxal phosphate)lysine.

This sequence belongs to the GcvP family. In terms of assembly, the glycine cleavage system is composed of four proteins: P, T, L and H. Requires pyridoxal 5'-phosphate as cofactor.

The enzyme catalyses N(6)-[(R)-lipoyl]-L-lysyl-[glycine-cleavage complex H protein] + glycine + H(+) = N(6)-[(R)-S(8)-aminomethyldihydrolipoyl]-L-lysyl-[glycine-cleavage complex H protein] + CO2. Its function is as follows. The glycine cleavage system catalyzes the degradation of glycine. The P protein binds the alpha-amino group of glycine through its pyridoxal phosphate cofactor; CO(2) is released and the remaining methylamine moiety is then transferred to the lipoamide cofactor of the H protein. The polypeptide is Glycine dehydrogenase (decarboxylating) (Bacteroides fragilis (strain YCH46)).